Here is a 341-residue protein sequence, read N- to C-terminus: HTH-type transcriptional repressor PurR (341 aa).

In terms of domain architecture, HTH lacI-type spans 2–56 (ATIKDVAKRAGVSTTTVSHVINKTRFVAEETKAAVRAAIKELHYSPSAVARSLKV). Residues 4–23 (IKDVAKRAGVSTTTVSHVIN) constitute a DNA-binding region (H-T-H motif). Residues 48 to 56 (SAVARSLKV) mediate DNA binding. Hypoxanthine contacts are provided by Tyr73, Arg190, Thr192, Phe221, and Asp275.

In terms of assembly, homodimer.

It participates in purine metabolism; purine nucleotide biosynthesis [regulation]. Is the main repressor of the genes involved in the de novo synthesis of purine nucleotides, regulating purB, purC, purEK, purF, purHD, purL, purMN and guaBA expression. PurR is allosterically activated to bind its cognate DNA by binding the purine corepressors, hypoxanthine or guanine, thereby effecting transcription repression. This is HTH-type transcriptional repressor PurR from Pectobacterium carotovorum subsp. carotovorum (strain PC1).